A 632-amino-acid polypeptide reads, in one-letter code: tRNA uridine 5-carboxymethylaminomethyl modification enzyme MnmG (632 aa).

FAD is bound by residues 15-20 (GAGHAG), I127, and S182. 276–290 (GPRYCPSIEDKIVRF) is an NAD(+) binding site. An FAD-binding site is contributed by Q373.

The protein belongs to the MnmG family. As to quaternary structure, homodimer. Heterotetramer of two MnmE and two MnmG subunits. It depends on FAD as a cofactor.

The protein localises to the cytoplasm. Functionally, NAD-binding protein involved in the addition of a carboxymethylaminomethyl (cmnm) group at the wobble position (U34) of certain tRNAs, forming tRNA-cmnm(5)s(2)U34. The chain is tRNA uridine 5-carboxymethylaminomethyl modification enzyme MnmG from Streptococcus pyogenes serotype M2 (strain MGAS10270).